Reading from the N-terminus, the 342-residue chain is Ribosomal RNA small subunit methyltransferase C (342 aa).

Belongs to the methyltransferase superfamily. RsmC family. Monomer.

It localises to the cytoplasm. The enzyme catalyses guanosine(1207) in 16S rRNA + S-adenosyl-L-methionine = N(2)-methylguanosine(1207) in 16S rRNA + S-adenosyl-L-homocysteine + H(+). Its function is as follows. Specifically methylates the guanine in position 1207 of 16S rRNA in the 30S particle. This chain is Ribosomal RNA small subunit methyltransferase C, found in Salmonella gallinarum (strain 287/91 / NCTC 13346).